The sequence spans 491 residues: Lysine--tRNA ligase (491 aa).

Glu399 and Glu406 together coordinate Mg(2+).

This sequence belongs to the class-II aminoacyl-tRNA synthetase family. Homodimer. Requires Mg(2+) as cofactor.

Its subcellular location is the cytoplasm. The enzyme catalyses tRNA(Lys) + L-lysine + ATP = L-lysyl-tRNA(Lys) + AMP + diphosphate. The polypeptide is Lysine--tRNA ligase (Chloroflexus aurantiacus (strain ATCC 29366 / DSM 635 / J-10-fl)).